The chain runs to 238 residues: Gem-associated protein 8 (238 aa).

The segment at 66–127 (AGHPWDSQGQ…LESDSDDEVE (62 aa)) is disordered. 2 stretches are compositionally biased toward polar residues: residues 72–82 (SQGQHMAQQES) and 96–108 (LRNS…STRG). Acidic residues predominate over residues 113 to 127 (CEEEELESDSDDEVE). Ser-122 carries the post-translational modification Phosphoserine. A coiled-coil region spans residues 131-164 (SNMEITEELRQYFAQTERHREERRRQQQLDAERL).

In terms of assembly, part of the core SMN complex that contains SMN1, GEMIN2/SIP1, DDX20/GEMIN3, GEMIN4, GEMIN5, GEMIN6, GEMIN7, GEMIN8 and STRAP/UNRIP. Part of the SMN-Sm complex that contains SMN1, GEMIN2/SIP1, DDX20/GEMIN3, GEMIN4, GEMIN5, GEMIN6, GEMIN7, GEMIN8, STRAP/UNRIP and the Sm proteins SNRPB, SNRPD1, SNRPD2, SNRPD3, SNRPE, SNRPF and SNRPG. Interacts with GEMIN6; the interaction is direct. Interacts with GEMIN7; the interaction is direct. Interacts with SMN1; the interaction is direct. Interacts with GEMIN4; the interaction is direct. In terms of tissue distribution, widely expressed in embryonic tissues (at protein level).

The protein localises to the nucleus. The protein resides in the gem. It localises to the cytoplasm. In terms of biological role, the SMN complex catalyzes the assembly of small nuclear ribonucleoproteins (snRNPs), the building blocks of the spliceosome, and thereby plays an important role in the splicing of cellular pre-mRNAs. Most spliceosomal snRNPs contain a common set of Sm proteins SNRPB, SNRPD1, SNRPD2, SNRPD3, SNRPE, SNRPF and SNRPG that assemble in a heptameric protein ring on the Sm site of the small nuclear RNA to form the core snRNP (Sm core). In the cytosol, the Sm proteins SNRPD1, SNRPD2, SNRPE, SNRPF and SNRPG are trapped in an inactive 6S pICln-Sm complex by the chaperone CLNS1A that controls the assembly of the core snRNP. To assemble core snRNPs, the SMN complex accepts the trapped 5Sm proteins from CLNS1A forming an intermediate. Binding of snRNA inside 5Sm triggers eviction of the SMN complex, thereby allowing binding of SNRPD3 and SNRPB to complete assembly of the core snRNP. The protein is Gem-associated protein 8 (Gemin8) of Mus musculus (Mouse).